A 165-amino-acid chain; its full sequence is Regulator of ribonuclease activity A (165 aa).

Belongs to the RraA family. As to quaternary structure, homotrimer. Binds to both RNA-binding sites in the C-terminal region of Rne and to RhlB.

It is found in the cytoplasm. Globally modulates RNA abundance by binding to RNase E (Rne) and regulating its endonucleolytic activity. Can modulate Rne action in a substrate-dependent manner by altering the composition of the degradosome. Modulates RNA-binding and helicase activities of the degradosome. In Pseudoalteromonas translucida (strain TAC 125), this protein is Regulator of ribonuclease activity A.